The chain runs to 82 residues: Putative defensin-like protein 48 (82 aa).

Residues Met1–Gly28 form the signal peptide. Disulfide bonds link Cys39–Cys80, Cys43–Cys67, Cys53–Cys78, and Cys57–Cys79.

The protein belongs to the DEFL family.

Its subcellular location is the secreted. In Arabidopsis thaliana (Mouse-ear cress), this protein is Putative defensin-like protein 48.